We begin with the raw amino-acid sequence, 356 residues long: Peptide chain release factor 1 (356 aa).

The residue at position 233 (Q233) is an N5-methylglutamine.

Belongs to the prokaryotic/mitochondrial release factor family. Methylated by PrmC. Methylation increases the termination efficiency of RF1.

The protein resides in the cytoplasm. Its function is as follows. Peptide chain release factor 1 directs the termination of translation in response to the peptide chain termination codons UAG and UAA. This chain is Peptide chain release factor 1 (prfA), found in Bacillus subtilis (strain 168).